Consider the following 330-residue polypeptide: Aspartate--ammonia ligase (330 aa).

It belongs to the class-II aminoacyl-tRNA synthetase family. AsnA subfamily.

It localises to the cytoplasm. It carries out the reaction L-aspartate + NH4(+) + ATP = L-asparagine + AMP + diphosphate + H(+). It participates in amino-acid biosynthesis; L-asparagine biosynthesis; L-asparagine from L-aspartate (ammonia route): step 1/1. This is Aspartate--ammonia ligase from Streptococcus pneumoniae serotype 19F (strain G54).